Reading from the N-terminus, the 435-residue chain is D-aminoacyl-tRNA deacylase (435 aa).

This sequence belongs to the DtdA deacylase family. Monomer. The cofactor is Zn(2+).

It catalyses the reaction a D-aminoacyl-tRNA + H2O = a tRNA + a D-alpha-amino acid + H(+). The enzyme catalyses glycyl-tRNA(Ala) + H2O = tRNA(Ala) + glycine + H(+). In terms of biological role, D-aminoacyl-tRNA deacylase with broad substrate specificity. By recycling D-aminoacyl-tRNA to D-amino acids and free tRNA molecules, this enzyme counteracts the toxicity associated with the formation of D-aminoacyl-tRNA entities in vivo. In Methanosphaerula palustris (strain ATCC BAA-1556 / DSM 19958 / E1-9c), this protein is D-aminoacyl-tRNA deacylase.